A 345-amino-acid chain; its full sequence is MEELKVEMEEETVTFTGSVAASSSVGSSSSPRPMEGLNETGPPPFLTKTYEMVEDPATDTVVSWSNGRNSFVVWDSHKFSTTLLPRYFKHSNFSSFIRQLNTYGFRKIDPDRWEFANEGFLAGQKHLLKNIKRRRNMGLQNVNQQGSGMSCVEVGQYGFDGEVERLKRDHGVLVAEVVRLRQQQHSSKSQVAAMEQRLLVTEKRQQQMMTFLAKALNNPNFVQQFAVMSKEKKSLFGLDVGRKRRLTSTPSLGTMEENLLHDQEFDRMKDDMEMLFAAAIDDEANNSMPTKEEQCLEAMNVMMRDGNLEAALDVKVEDLVGSPLDWDSQDLHDMVDQMGFLGSEP.

Positions 17 to 30 (GSVAASSSVGSSSS) are enriched in low complexity. A disordered region spans residues 17–40 (GSVAASSSVGSSSSPRPMEGLNET). A DNA-binding region spans residues 42–136 (PPPFLTKTYE…LLKNIKRRRN (95 aa)). Positions 150 to 216 (SCVEVGQYGF…QMMTFLAKAL (67 aa)) are hydrophobic repeat HR-A/B. The Nuclear localization signal motif lies at 231 to 238 (EKKSLFGL). The AHA1 motif lies at 273-282 (EMLFAAAIDD). K315 participates in a covalent cross-link: Glycyl lysine isopeptide (Lys-Gly) (interchain with G-Cter in SUMO). Positions 324 to 333 (LDWDSQDLHD) match the AHA2 motif. Residues 334 to 341 (MVDQMGFL) carry the Nuclear export signal motif.

This sequence belongs to the HSF family. Class A subfamily. As to quaternary structure, homotrimer. Interacts with SUMO1. Binds to HSBP. In terms of processing, exhibits temperature-dependent phosphorylation. Sumoylated at Lys-315. Sumoylation represses its function.

Its subcellular location is the cytoplasm. The protein resides in the nucleus. In terms of biological role, transcriptional activator that specifically binds DNA sequence 5'-AGAAnnTTCT-3' known as heat shock promoter elements (HSE). Seems to be involved in other environmental stress responses. Activates ascorbate peroxidase 2 (APX2) in addition to several heat shock protein (HSPs). Binds to the promoter of SGIP1 and activates its expression in heat acclimated plants. Involved in the mechanisms necessary for quick response to heat and subsequent heritable transgenerational memory of heat acclimation (global warming) such as early flowering and attenuated immunity; this process includes epigenetic regulation as well as post-transcriptional gene silencing (PTGS). In response to heat, HSFA2 is activated and promotes the expression of REF6 which in turn derepresses HSFA2, thus establishing an inheritable feedback loop able to trigger SGIP1 and subsequent SGIP1-mediated SGS3 degradation; this prevents the biosynthesis of trans-acting siRNA (tasiRNA) and leads to the release of HTT5, which drives early flowering but attenuates immunity. This chain is Heat stress transcription factor A-2, found in Arabidopsis thaliana (Mouse-ear cress).